We begin with the raw amino-acid sequence, 193 residues long: Leucyl/phenylalanyl-tRNA--protein transferase (193 aa).

Belongs to the L/F-transferase family.

It localises to the cytoplasm. The catalysed reaction is N-terminal L-lysyl-[protein] + L-leucyl-tRNA(Leu) = N-terminal L-leucyl-L-lysyl-[protein] + tRNA(Leu) + H(+). It carries out the reaction N-terminal L-arginyl-[protein] + L-leucyl-tRNA(Leu) = N-terminal L-leucyl-L-arginyl-[protein] + tRNA(Leu) + H(+). The enzyme catalyses L-phenylalanyl-tRNA(Phe) + an N-terminal L-alpha-aminoacyl-[protein] = an N-terminal L-phenylalanyl-L-alpha-aminoacyl-[protein] + tRNA(Phe). Its function is as follows. Functions in the N-end rule pathway of protein degradation where it conjugates Leu, Phe and, less efficiently, Met from aminoacyl-tRNAs to the N-termini of proteins containing an N-terminal arginine or lysine. This Akkermansia muciniphila (strain ATCC BAA-835 / DSM 22959 / JCM 33894 / BCRC 81048 / CCUG 64013 / CIP 107961 / Muc) protein is Leucyl/phenylalanyl-tRNA--protein transferase.